The primary structure comprises 577 residues: BICD family-like cargo adapter 1 (577 aa).

The segment at 63-100 (LLAAGERSSEPGEHPQAEPESPVEGHGPPLPPPPTQDP) is disordered. Residues 69 to 79 (RSSEPGEHPQA) are compositionally biased toward basic and acidic residues. The CC1 box signature appears at 116–120 (AARLG). Positions 121–379 (KALLERNQDM…QLWEAYCQVR (259 aa)) form a coiled coil. A disordered region spans residues 389–415 (DSADSAVSTDSSMDESSETSSAKDVPA). The span at 390-399 (SADSAVSTDS) shows a compositional bias: low complexity. Positions 443–528 (LSVEMTALKE…LEAWQDDMHR (86 aa)) form a coiled coil.

The protein belongs to the BICDR family. In terms of assembly, part of a tripartite complex with dynein and dynactin, acts an adapter linking the dynein motor complex and dynactin. Interacts with KIF1C. Interacts with RAB6A and RAB6B; interaction is specific to Rab6. Highly expressed during early embryonic development. Predominantly expressed in kidney, undifferentiated neural tissue and developing eye.

It is found in the cytoplasm. The protein localises to the cytoskeleton. It localises to the microtubule organizing center. The protein resides in the centrosome. Acts as an adapter protein linking the dynein motor complex to various cargos and converts dynein from a non-processive to a highly processive motor in the presence of dynactin. Facilitates the interaction between dynein and dynactin and activates dynein processivity (the ability to move along a microtubule for a long distance without falling off the track). Predominantly recruits 2 dyneins, which increases both the force and speed of the microtubule motor. Component of secretory vesicle machinery in developing neurons that acts as a regulator of neurite outgrowth. Regulates the secretory vesicle transport by controlling the accumulation of Rab6-containing secretory vesicles in the pericentrosomal region restricting anterograde secretory transport during the early phase of neuronal differentiation, thereby inhibiting neuritogenesis. The chain is BICD family-like cargo adapter 1 (Bicdl1) from Mus musculus (Mouse).